Here is a 495-residue protein sequence, read N- to C-terminus: L-arabinose isomerase (495 aa).

Positions 305, 332, 349, and 448 each coordinate Mn(2+).

Belongs to the arabinose isomerase family. Mn(2+) serves as cofactor.

It catalyses the reaction beta-L-arabinopyranose = L-ribulose. The protein operates within carbohydrate degradation; L-arabinose degradation via L-ribulose; D-xylulose 5-phosphate from L-arabinose (bacterial route): step 1/3. Functionally, catalyzes the conversion of L-arabinose to L-ribulose. This Actinobacillus succinogenes (strain ATCC 55618 / DSM 22257 / CCUG 43843 / 130Z) protein is L-arabinose isomerase.